Reading from the N-terminus, the 388-residue chain is NADPH-dependent butanol dehydrogenase (388 aa).

It belongs to the iron-containing alcohol dehydrogenase family.

This enzyme has activity using butanol and ethanol as substrates. This is NADPH-dependent butanol dehydrogenase (adh1) from Clostridium saccharobutylicum.